The sequence spans 253 residues: 5-oxoprolinase subunit A (253 aa).

It belongs to the LamB/PxpA family. Forms a complex composed of PxpA, PxpB and PxpC.

It catalyses the reaction 5-oxo-L-proline + ATP + 2 H2O = L-glutamate + ADP + phosphate + H(+). In terms of biological role, catalyzes the cleavage of 5-oxoproline to form L-glutamate coupled to the hydrolysis of ATP to ADP and inorganic phosphate. The chain is 5-oxoprolinase subunit A from Bacillus cereus (strain ATCC 10987 / NRS 248).